We begin with the raw amino-acid sequence, 922 residues long: uncharacterized protein (922 aa).

Disordered stretches follow at residues 459 to 522 (SLQD…QPKN), 539 to 627 (SNSA…SSLG), 649 to 668 (GFSS…RQPF), 692 to 835 (QKLD…VTSL), and 856 to 879 (PWRK…RPER). The span at 546-567 (KAKHSSNKPHKAASSRISKTKS) shows a compositional bias: basic residues. A compositionally biased stretch (basic and acidic residues) spans 582–600 (KKSEESKQSGKKVKVEEKQ). Residues 651–660 (SSSRTLGSSS) show a composition bias toward low complexity. Basic and acidic residues predominate over residues 692 to 702 (QKLDGSAEKEC). Polar residues-rich tracts occupy residues 755 to 779 (DSTN…SLTG) and 790 to 824 (KATQ…SSLQ). A coiled-coil region spans residues 872–899 (TEEQRPEREAMKRKAQQERENAAKYTSL).

This is an uncharacterized protein from Homo sapiens (Human).